Consider the following 473-residue polypeptide: MTRGRVIQVMGPVVDVKFENGHLPAIYNALKIQHKARNENEVDIDLTLEVALHLGDDTVRTIAMASTDGLIRGMEVIDTGAPISVPVGEVTLGRVFNVLGEPIDLEGDIPADARRDPIHRPAPKFEELATEVEILETGIKVVDLLAPYIKGGKIGLFGGAGVGKTVLIQELIHNIAQEHGGISVFAGVGERTREGNDLYHEMKDSGVISKTAMVFGQMNEPPGARMRVALTGLTMAEYFRDEQGQDVLLFIDNIFRFTQAGSEVSALLGRMPSAVGYQPTLATEMGQLQERITSTAKGSITSIQAIYVPADDYTDPAPATTFSHLDATTNLERKLAEMGIYPAVDPLASTSRALAPEIVGEEHYQVARKVQQTLQRYKELQDIIAILGMDELSDEDKLVVHRARRIQFFLSQNFHVAEQFTGQPGSYVPVKETVRGFKEILEGKYDHLPEDRFRLVGRIEDVVEKAKAMGVEV.

Gly158–Thr165 contacts ATP.

The protein belongs to the ATPase alpha/beta chains family. As to quaternary structure, F-type ATPases have 2 components, CF(1) - the catalytic core - and CF(0) - the membrane proton channel. CF(1) has five subunits: alpha(3), beta(3), gamma(1), delta(1), epsilon(1). CF(0) has three main subunits: a(1), b(2) and c(9-12). The alpha and beta chains form an alternating ring which encloses part of the gamma chain. CF(1) is attached to CF(0) by a central stalk formed by the gamma and epsilon chains, while a peripheral stalk is formed by the delta and b chains.

Its subcellular location is the cell membrane. The enzyme catalyses ATP + H2O + 4 H(+)(in) = ADP + phosphate + 5 H(+)(out). In terms of biological role, produces ATP from ADP in the presence of a proton gradient across the membrane. The catalytic sites are hosted primarily by the beta subunits. The sequence is that of ATP synthase subunit beta from Geobacillus thermoleovorans (Bacillus thermoleovorans).